Reading from the N-terminus, the 154-residue chain is SsrA-binding protein (154 aa).

This sequence belongs to the SmpB family.

The protein localises to the cytoplasm. Functionally, required for rescue of stalled ribosomes mediated by trans-translation. Binds to transfer-messenger RNA (tmRNA), required for stable association of tmRNA with ribosomes. tmRNA and SmpB together mimic tRNA shape, replacing the anticodon stem-loop with SmpB. tmRNA is encoded by the ssrA gene; the 2 termini fold to resemble tRNA(Ala) and it encodes a 'tag peptide', a short internal open reading frame. During trans-translation Ala-aminoacylated tmRNA acts like a tRNA, entering the A-site of stalled ribosomes, displacing the stalled mRNA. The ribosome then switches to translate the ORF on the tmRNA; the nascent peptide is terminated with the 'tag peptide' encoded by the tmRNA and targeted for degradation. The ribosome is freed to recommence translation, which seems to be the essential function of trans-translation. This is SsrA-binding protein from Synechococcus sp. (strain JA-3-3Ab) (Cyanobacteria bacterium Yellowstone A-Prime).